The following is a 126-amino-acid chain: SOSS complex subunit C homolog (126 aa).

Positions 106 to 126 are disordered; it reads LEPLPSPATTPTAPPSHSISK. Positions 107 to 119 are enriched in pro residues; sequence EPLPSPATTPTAP.

This sequence belongs to the SOSS-C family.

This chain is SOSS complex subunit C homolog, found in Drosophila sechellia (Fruit fly).